The primary structure comprises 420 residues: UDP-N-acetylglucosamine 1-carboxyvinyltransferase 2 (420 aa).

Position 22–23 (22–23 (KN)) interacts with phosphoenolpyruvate. Residue Arg92 participates in UDP-N-acetyl-alpha-D-glucosamine binding. The Proton donor role is filled by Cys116. A 2-(S-cysteinyl)pyruvic acid O-phosphothioketal modification is found at Cys116. UDP-N-acetyl-alpha-D-glucosamine-binding positions include 121-125 (RPIDL), Asp307, and Ile329.

This sequence belongs to the EPSP synthase family. MurA subfamily.

Its subcellular location is the cytoplasm. It catalyses the reaction phosphoenolpyruvate + UDP-N-acetyl-alpha-D-glucosamine = UDP-N-acetyl-3-O-(1-carboxyvinyl)-alpha-D-glucosamine + phosphate. It functions in the pathway cell wall biogenesis; peptidoglycan biosynthesis. In terms of biological role, cell wall formation. Adds enolpyruvyl to UDP-N-acetylglucosamine. In Streptococcus thermophilus (strain CNRZ 1066), this protein is UDP-N-acetylglucosamine 1-carboxyvinyltransferase 2.